A 177-amino-acid chain; its full sequence is Probable adenylyl-sulfate kinase (177 aa).

12–19 (GLSGAGKT) provides a ligand contact to ATP. Ser-86 serves as the catalytic Phosphoserine intermediate.

Belongs to the APS kinase family.

The catalysed reaction is adenosine 5'-phosphosulfate + ATP = 3'-phosphoadenylyl sulfate + ADP + H(+). It functions in the pathway sulfur metabolism; hydrogen sulfide biosynthesis; sulfite from sulfate: step 2/3. Catalyzes the synthesis of activated sulfate. The sequence is that of Probable adenylyl-sulfate kinase (cysC) from Synechocystis sp. (strain ATCC 27184 / PCC 6803 / Kazusa).